A 266-amino-acid polypeptide reads, in one-letter code: Small ribosomal subunit protein uS3 (266 aa).

Positions 39–107 (VREYLKKKLK…PVHVNIEEIR (69 aa)) constitute a KH type-2 domain. The interval 214–266 (PVVEEVTEDKRPRRNARPGDRRPRRDGEGGAPGARRGGPRRGAGKPEDGKTGE) is disordered. Composition is skewed to basic and acidic residues over residues 230–241 (RPGDRRPRRDGE) and 257–266 (GKPEDGKTGE).

The protein belongs to the universal ribosomal protein uS3 family. As to quaternary structure, part of the 30S ribosomal subunit. Forms a tight complex with proteins S10 and S14.

In terms of biological role, binds the lower part of the 30S subunit head. Binds mRNA in the 70S ribosome, positioning it for translation. The sequence is that of Small ribosomal subunit protein uS3 from Burkholderia mallei (strain NCTC 10247).